The primary structure comprises 687 residues: Polyphosphate kinase (687 aa).

Asparagine 45 lines the ATP pocket. Positions 375 and 405 each coordinate Mg(2+). The active-site Phosphohistidine intermediate is the histidine 435. ATP contacts are provided by tyrosine 472, arginine 568, and histidine 596.

This sequence belongs to the polyphosphate kinase 1 (PPK1) family. The cofactor is Mg(2+). Post-translationally, an intermediate of this reaction is the autophosphorylated ppk in which a phosphate is covalently linked to a histidine residue through a N-P bond.

It carries out the reaction [phosphate](n) + ATP = [phosphate](n+1) + ADP. Functionally, catalyzes the reversible transfer of the terminal phosphate of ATP to form a long-chain polyphosphate (polyP). The protein is Polyphosphate kinase of Burkholderia multivorans (strain ATCC 17616 / 249).